A 111-amino-acid chain; its full sequence is Small ribosomal subunit protein bS16 (111 aa).

Residues 92 to 111 are disordered; sequence MDVKAKNRKARSSKQEAKEA.

The protein belongs to the bacterial ribosomal protein bS16 family.

This chain is Small ribosomal subunit protein bS16, found in Rickettsia akari (strain Hartford).